The chain runs to 204 residues: Recombination protein RecR (204 aa).

A C4-type zinc finger spans residues Cys58–Cys75. The region spanning Thr83–Pro181 is the Toprim domain.

Belongs to the RecR family.

Functionally, may play a role in DNA repair. It seems to be involved in an RecBC-independent recombinational process of DNA repair. It may act with RecF and RecO. This is Recombination protein RecR from Chlorobium chlorochromatii (strain CaD3).